The primary structure comprises 138 residues: ATP synthase epsilon chain (138 aa).

The protein belongs to the ATPase epsilon chain family. As to quaternary structure, F-type ATPases have 2 components, CF(1) - the catalytic core - and CF(0) - the membrane proton channel. CF(1) has five subunits: alpha(3), beta(3), gamma(1), delta(1), epsilon(1). CF(0) has three main subunits: a, b and c.

The protein resides in the cell inner membrane. Its function is as follows. Produces ATP from ADP in the presence of a proton gradient across the membrane. The chain is ATP synthase epsilon chain from Vesicomyosocius okutanii subsp. Calyptogena okutanii (strain HA).